The primary structure comprises 871 residues: Phosphoinositide 3-kinase regulatory subunit 5 (871 aa).

Residue Met1 is modified to N-acetylmethionine. The heterodimerization stretch occupies residues 25–101; that stretch reads SLGRRSAPWS…TPHFPPDSDL (77 aa). Positions 381–413 are disordered; sequence MDSGYVEDSEENSEWPQKPGSQKRQGHRRPGQK. Residues Ser451 and Ser500 each carry the phosphoserine modification. The interaction with beta-gamma G protein dimers stretch occupies residues 646 to 746; that stretch reads PILADMLLYY…WSNLEKVCTS (101 aa).

In terms of assembly, heterodimer of a catalytic subunit (PIK3CG/p120) and a regulatory (PIK3R5a/p101) subunit. Interacts with beta-gamma G protein dimers.

The protein resides in the nucleus. It localises to the cytoplasm. The protein localises to the cell membrane. Greatly activated by G gamma proteins. Functionally, regulatory subunit of the PI3K gamma complex. Required for recruitment of the catalytic subunit to the plasma membrane via interaction with beta-gamma G protein dimers. Required for G protein-mediated activation of PIK3CG. The protein is Phosphoinositide 3-kinase regulatory subunit 5 (Pik3r5) of Mus musculus (Mouse).